The chain runs to 121 residues: Ribosome-binding factor A (121 aa).

The protein belongs to the RbfA family. Monomer. Binds 30S ribosomal subunits, but not 50S ribosomal subunits or 70S ribosomes.

It localises to the cytoplasm. In terms of biological role, one of several proteins that assist in the late maturation steps of the functional core of the 30S ribosomal subunit. Associates with free 30S ribosomal subunits (but not with 30S subunits that are part of 70S ribosomes or polysomes). Required for efficient processing of 16S rRNA. May interact with the 5'-terminal helix region of 16S rRNA. The sequence is that of Ribosome-binding factor A from Lactobacillus helveticus (strain DPC 4571).